A 250-amino-acid polypeptide reads, in one-letter code: Small ribosomal subunit protein uS3 (250 aa).

The region spanning 39–107 (VREFLTKKLK…PAQVSINEID (69 aa)) is the KH type-2 domain. Residues 214–250 (VMNPAPQEERPAKRGRGRGEGQERRGRRSDRAADKGE) are disordered. Residues 220–250 (QEERPAKRGRGRGEGQERRGRRSDRAADKGE) show a composition bias toward basic and acidic residues.

It belongs to the universal ribosomal protein uS3 family. In terms of assembly, part of the 30S ribosomal subunit. Forms a tight complex with proteins S10 and S14.

Its function is as follows. Binds the lower part of the 30S subunit head. Binds mRNA in the 70S ribosome, positioning it for translation. This is Small ribosomal subunit protein uS3 from Acinetobacter baylyi (strain ATCC 33305 / BD413 / ADP1).